We begin with the raw amino-acid sequence, 325 residues long: MNSTSNSSLGNTFISKTLKEKSLTVQVLVGILLYVNGLMIFTFLKKETFRDTRYILFAQTLFVDSALMLFADLTLVGSAYELFIHIISCYIFCTVMALLSICSPVTLVAMCLERYVAICLPLRHASISSPKNTINGLLIIWGVSSVIPLFIFIVSFTYTPPNAMNSYVVCSNDVMFQVKWLAEMRALSQQLLFVIMLCIVGSTYIKIMVAAKSASAENKKSTYKGLRTVILHGLQLILGMMQLITPYIDILTLKVDIMLFINVKFSNFMLFWIFPRCLSPLVYGLRDKKFYNALKYYAFCGIYVCKKHKIKDSKTIRGAVSIAIY.

The Extracellular portion of the chain corresponds to 1 to 22 (MNSTSNSSLGNTFISKTLKEKS). N-linked (GlcNAc...) asparagine glycosylation is found at N2 and N6. The chain crosses the membrane as a helical span at residues 23–43 (LTVQVLVGILLYVNGLMIFTF). Residues 44-54 (LKKETFRDTRY) are Cytoplasmic-facing. A helical transmembrane segment spans residues 55–75 (ILFAQTLFVDSALMLFADLTL). Over 76–91 (VGSAYELFIHIISCYI) the chain is Extracellular. C89 and C170 form a disulfide bridge. Residues 92–112 (FCTVMALLSICSPVTLVAMCL) traverse the membrane as a helical segment. At 113–135 (ERYVAICLPLRHASISSPKNTIN) the chain is on the cytoplasmic side. The chain crosses the membrane as a helical span at residues 136 to 156 (GLLIIWGVSSVIPLFIFIVSF). The Extracellular segment spans residues 157-190 (TYTPPNAMNSYVVCSNDVMFQVKWLAEMRALSQQ). The helical transmembrane segment at 191-211 (LLFVIMLCIVGSTYIKIMVAA) threads the bilayer. Topologically, residues 212 to 227 (KSASAENKKSTYKGLR) are cytoplasmic. The helical transmembrane segment at 228–248 (TVILHGLQLILGMMQLITPYI) threads the bilayer. Residues 249 to 267 (DILTLKVDIMLFINVKFSN) are Extracellular-facing. The chain crosses the membrane as a helical span at residues 268-285 (FMLFWIFPRCLSPLVYGL). Over 286 to 325 (RDKKFYNALKYYAFCGIYVCKKHKIKDSKTIRGAVSIAIY) the chain is Cytoplasmic.

This sequence belongs to the G-protein coupled receptor 1 family. Homodimer. Monomer.

The protein localises to the cell membrane. Its subcellular location is the cytoplasm. Its function is as follows. Probable olfactory receptor. The chain is Odorant receptor 131-2 from Danio rerio (Zebrafish).